The chain runs to 475 residues: Ankyrin repeat, SAM and basic leucine zipper domain-containing protein 1 (475 aa).

Residues 1–10 (MAAGRLRGLA) are compositionally biased toward low complexity. Positions 1 to 24 (MAAGRLRGLAVAGGGESSESDDDG) are disordered. 3 positions are modified to phosphoserine: serine 17, serine 18, and serine 20. 6 ANK repeats span residues 45 to 74 (EKNE…SVDS), 78 to 107 (YGWT…NANF), 110 to 144 (DKQT…DPNV), 148 to 177 (RLMT…EVNT), 181 to 210 (SGYT…DKML), and 214 to 243 (DGNI…PLKG). The SAM domain occupies 272-334 (SYTAFGDLEV…KILAALKELD (63 aa)).

As to quaternary structure, interacts with DDX4, PIWIL1, RANBP9 and TDRD1.

Its subcellular location is the cytoplasm. Functionally, plays a central role during spermatogenesis by repressing transposable elements and preventing their mobilization, which is essential for the germline integrity. Acts via the piRNA metabolic process, which mediates the repression of transposable elements during meiosis by forming complexes composed of piRNAs and Piwi proteins and governs the methylation and subsequent repression of transposons. Its association with pi-bodies suggests a participation in the primary piRNAs metabolic process. Required prior to the pachytene stage to facilitate the production of multiple types of piRNAs, including those associated with repeats involved in the regulation of retrotransposons. May act by mediating protein-protein interactions during germ cell maturation. The protein is Ankyrin repeat, SAM and basic leucine zipper domain-containing protein 1 (ASZ1) of Carollia perspicillata (Seba's short-tailed bat).